A 292-amino-acid chain; its full sequence is tRNA-cytidine(32) 2-sulfurtransferase (292 aa).

The short motif at 53–58 is the PP-loop motif element; it reads SGGKDS. [4Fe-4S] cluster is bound by residues Cys128, Cys131, and Cys219.

The protein belongs to the TtcA family. In terms of assembly, homodimer. It depends on Mg(2+) as a cofactor. [4Fe-4S] cluster is required as a cofactor.

The protein resides in the cytoplasm. The enzyme catalyses cytidine(32) in tRNA + S-sulfanyl-L-cysteinyl-[cysteine desulfurase] + AH2 + ATP = 2-thiocytidine(32) in tRNA + L-cysteinyl-[cysteine desulfurase] + A + AMP + diphosphate + H(+). Its pathway is tRNA modification. Catalyzes the ATP-dependent 2-thiolation of cytidine in position 32 of tRNA, to form 2-thiocytidine (s(2)C32). The sulfur atoms are provided by the cysteine/cysteine desulfurase (IscS) system. This Cereibacter sphaeroides (strain ATCC 17029 / ATH 2.4.9) (Rhodobacter sphaeroides) protein is tRNA-cytidine(32) 2-sulfurtransferase.